The sequence spans 186 residues: ATP synthase subunit delta, chloroplastic (186 aa).

This sequence belongs to the ATPase delta chain family. F-type ATPases have 2 components, F(1) - the catalytic core - and F(0) - the membrane proton channel. F(1) has five subunits: alpha(3), beta(3), gamma(1), delta(1), epsilon(1). CF(0) has four main subunits: a(1), b(1), b'(1) and c(10-14). The alpha and beta chains form an alternating ring which encloses part of the gamma chain. F(1) is attached to F(0) by a central stalk formed by the gamma and epsilon chains, while a peripheral stalk is formed by the delta, b and b' chains.

The protein localises to the plastid. The protein resides in the chloroplast thylakoid membrane. Its function is as follows. F(1)F(0) ATP synthase produces ATP from ADP in the presence of a proton or sodium gradient. F-type ATPases consist of two structural domains, F(1) containing the extramembraneous catalytic core and F(0) containing the membrane proton channel, linked together by a central stalk and a peripheral stalk. During catalysis, ATP synthesis in the catalytic domain of F(1) is coupled via a rotary mechanism of the central stalk subunits to proton translocation. In terms of biological role, this protein is part of the stalk that links CF(0) to CF(1). It either transmits conformational changes from CF(0) to CF(1) or is implicated in proton conduction. The sequence is that of ATP synthase subunit delta, chloroplastic from Porphyra purpurea (Red seaweed).